The primary structure comprises 35 residues: Augerpeptide hheTx5 (35 aa).

In terms of processing, contains 4 disulfide bonds. In terms of tissue distribution, expressed by the venom duct.

Its subcellular location is the secreted. This Hastula hectica (Sea snail) protein is Augerpeptide hheTx5.